A 216-amino-acid chain; its full sequence is Somatotropin (216 aa).

A signal peptide spans methionine 1–alanine 26. Histidine 45 is a binding site for Zn(2+). An intrachain disulfide couples cysteine 78 to cysteine 189. The residue at position 131 (serine 131) is a Phosphoserine. Position 198 (glutamate 198) interacts with Zn(2+). Cysteine 206 and cysteine 214 are joined by a disulfide.

This sequence belongs to the somatotropin/prolactin family.

The protein localises to the secreted. Functionally, plays an important role in growth control. Its major role in stimulating body growth is to stimulate the liver and other tissues to secrete IGF1. It stimulates both the differentiation and proliferation of myoblasts. It also stimulates amino acid uptake and protein synthesis in muscle and other tissues. This chain is Somatotropin (GH1), found in Spalax ehrenbergi (Middle East blind mole rat).